Here is a 218-residue protein sequence, read N- to C-terminus: Ribose-5-phosphate isomerase A (218 aa).

Substrate contacts are provided by residues 28–31 (TGST), 81–84 (DGAD), and 94–97 (KGGG). Glu-103 acts as the Proton acceptor in catalysis. Residue Lys-121 coordinates substrate.

Belongs to the ribose 5-phosphate isomerase family. Homodimer.

It carries out the reaction aldehydo-D-ribose 5-phosphate = D-ribulose 5-phosphate. Its pathway is carbohydrate degradation; pentose phosphate pathway; D-ribose 5-phosphate from D-ribulose 5-phosphate (non-oxidative stage): step 1/1. Functionally, catalyzes the reversible conversion of ribose-5-phosphate to ribulose 5-phosphate. The protein is Ribose-5-phosphate isomerase A of Proteus mirabilis (strain HI4320).